A 789-amino-acid chain; its full sequence is UPF0313 protein VC_1711 (789 aa).

The Radical SAM core domain maps to 363 to 642; that stretch reads AYDMIKTSVN…KALLRYHDPA (280 aa). [4Fe-4S] cluster-binding residues include cysteine 377, cysteine 381, and cysteine 384. The disordered stretch occupies residues 669-789; the sequence is PEKDSDLVTP…NTQRQPQRAR (121 aa). Residues 683–698 are compositionally biased toward basic residues; sequence KSGRHGANRFATKHTH. Composition is skewed to polar residues over residues 716–726, 733–763, and 778–789; these read RPNSGNKSNQG, PTGSKPTANKPAGNQSARSEQNRGQQGQRGS, and RGNTQRQPQRAR.

It belongs to the UPF0313 family. Requires [4Fe-4S] cluster as cofactor.

The chain is UPF0313 protein VC_1711 from Vibrio cholerae serotype O1 (strain ATCC 39315 / El Tor Inaba N16961).